A 360-amino-acid polypeptide reads, in one-letter code: MSKLISKQGKRPALSQSGLAKPSTSKKSSASKNANTETAKLLTKALHPRNVHKYGYDFAALSKTLPALTPFVGPNAYGNISIDFANPDAVKQLNAALLLHHYSIRDWDIPHGYLCPPIPGRVDYLHYLADLLSAPHKGKANRNIRALDIGTGANGIYPLLGIESYSWQFVASDIDKVSLDNVDEILAKNPQLAAKLSLRLQLNPKAIFNGVIEKDEYFDVSLCNPPFHRSLADANAGTQRKLSNLAKNRGQSQQQAVQAKVALNFGGQKAELWCEGGEAAFLANMISESKGFAAQCLWFTSLVSKSENLKPCYAQLAKQGTSEVKTIEMHQGNKITRILAWSYLSLSQRQAWAKLRDQSR.

Residues M1–T36 are disordered. A compositionally biased stretch (low complexity) spans S23–T36.

The protein belongs to the methyltransferase superfamily. METTL16/RlmF family.

The protein localises to the cytoplasm. It catalyses the reaction adenosine(1618) in 23S rRNA + S-adenosyl-L-methionine = N(6)-methyladenosine(1618) in 23S rRNA + S-adenosyl-L-homocysteine + H(+). Its function is as follows. Specifically methylates the adenine in position 1618 of 23S rRNA. This chain is Ribosomal RNA large subunit methyltransferase F, found in Shewanella denitrificans (strain OS217 / ATCC BAA-1090 / DSM 15013).